The sequence spans 189 residues: MIAGVDEAGRGPLVGSVVAAAVILDPHNPIDGLNDSKKLTEKKREKLFVEIQEKALAWSIAEANHIEIDELNILQATFLAMRRAVDGLQIQPDKVLVDGNQIPKGISIHCEAIVGGDASHAEISAASILAKVYRDQQMKLLDEKYPLFGFAKHKGYPTKAHFQAIAIHGVVDEHRRSYAPVRRALNIDC.

The RNase H type-2 domain maps to 1–189; sequence MIAGVDEAGR…PVRRALNIDC (189 aa). The a divalent metal cation site is built by Asp-6, Glu-7, and Asp-98.

The protein belongs to the RNase HII family. It depends on Mn(2+) as a cofactor. Mg(2+) is required as a cofactor.

The protein localises to the cytoplasm. It carries out the reaction Endonucleolytic cleavage to 5'-phosphomonoester.. In terms of biological role, endonuclease that specifically degrades the RNA of RNA-DNA hybrids. The sequence is that of Ribonuclease HII from Acinetobacter baylyi (strain ATCC 33305 / BD413 / ADP1).